A 4912-amino-acid polypeptide reads, in one-letter code: Probable E3 ubiquitin-protein ligase HERC2 (4912 aa).

The disordered stretch occupies residues 1-67; sequence MFNRQASGGA…GSGSAAPPSH (67 aa). Over residues 8–17 the composition is skewed to gly residues; that stretch reads GGAGSSGQGA. Residues 18–31 are compositionally biased toward low complexity; it reads GSSQTASAAPVSAG. Gly residues-rich tracts occupy residues 32-41 and 49-59; these read VGVGGGGGAS and SAAGSGSGSGS. 5 RCC1 repeats span residues 634–685, 686–739, 741–789, 791–843, and 844–897; these read NHNA…AITC, GGNL…ALTS, GLVF…ALSS, GQLY…ALSS, and SGEV…VWTQ. Disordered stretches follow at residues 1102-1129, 1428-1475, and 1659-1681; these read RLSPTLGKQQEKEEEEREQQHQEPSTSP, QLLQ…PGRG, and QEQEKKPQSMPKQELEEQEEEET. Polar residues predominate over residues 1446–1458; that stretch reads SHSCHSTAGNTPT. Phosphothreonine is present on threonine 1776. Residues 1917–1990 enclose the MIB/HERC2 domain; the sequence is SGPDLAKLMK…QYDLQLADSA (74 aa). 2 disordered regions span residues 1994–2018 and 2381–2412; these read ASPTEPEREDVSGSEASPTSDSHPS and GSIYASPDEPDRSDAESQQPGEQDQQLSSGSG. Residues 2396–2412 are compositionally biased toward polar residues; that stretch reads ESQQPGEQDQQLSSGSG. The UBA domain occupies 2511-2557; that stretch reads ATDAQLIGQIMEMGFTRRTVELALKQLSLQAEIMPTPEQIVQWILEH. A disordered region spans residues 2572-2620; it reads LASSASSHDPEADSDNECPSSNSTTSSSTSSDTVEGQPMAVSGPAPPVK. Residues 2591–2604 show a composition bias toward low complexity; that stretch reads SSNSTTSSSTSSDT. Residues 2624–2699 form the CPH domain; sequence RKDFQTADLY…VCFVHIELVE (76 aa). The 179-residue stretch at 2780–2958 folds into the DOC domain; sequence TSATLPSLGD…FLASEYSAGV (179 aa). 7 RCC1 repeats span residues 2985 to 3036, 3037 to 3090, 3091 to 3142, 3144 to 3194, 3197 to 3248, 3250 to 3300, and 3302 to 3352; these read PCTV…IVSQ, DGKV…ALTL, DGKV…AISS, GELY…TLAL, DGAV…ALTR, GEVW…AVTD, and GQVY…AWGL. Disordered stretches follow at residues 3352–3374 and 3953–4000; these read LPNASSDEEKRGPVPFSSTRDPL and LPSS…EQPD. The segment covering 3974 to 3988 has biased composition (low complexity); it reads LNSTTSLSSSTVSNV. 7 RCC1 repeats span residues 4049 to 4099, 4101 to 4153, 4155 to 4205, 4207 to 4259, 4261 to 4311, 4313 to 4363, and 4365 to 4415; these read STIY…AVTP, GKLF…ALTT, GEVY…AITA, GHVL…CITD, DNVW…ALTK, GAVY…ACSD, and GEVY…ALST. An HECT domain is found at 4547-4882; it reads ALALPHRVWK…IHFCKSIDTD (336 aa). The active-site Glycyl thioester intermediate is cysteine 4850. The interval 4891 to 4912 is disordered; that stretch reads EPTEATGSEDNSDLESVASHEG.

Its subcellular location is the cytoplasm. It localises to the cytoskeleton. It is found in the microtubule organizing center. The protein resides in the centrosome. The protein localises to the centriole. It carries out the reaction S-ubiquitinyl-[E2 ubiquitin-conjugating enzyme]-L-cysteine + [acceptor protein]-L-lysine = [E2 ubiquitin-conjugating enzyme]-L-cysteine + N(6)-ubiquitinyl-[acceptor protein]-L-lysine.. It functions in the pathway protein modification; protein ubiquitination. Probable E3 ubiquitin-protein ligase which accepts ubiquitin from an E2 ubiquitin-conjugating enzyme in the form of a thioester and then directly transfers the ubiquitin to targeted substrates. In Drosophila melanogaster (Fruit fly), this protein is Probable E3 ubiquitin-protein ligase HERC2 (HERC2).